A 287-amino-acid chain; its full sequence is Putative sugar uptake protein spyM18_2243 (287 aa).

10 helical membrane passes run 4-26 (IFYA…KIGG), 33-50 (LGMT…WLIV), 55-72 (TLQL…WSIG), 85-107 (VSVA…GVLV), 117-134 (FVVG…FYFS), 154-171 (FRAL…AVLF), 181-200 (SVIL…FMSF), 207-229 (YVIK…LLAA), 234-256 (LAIA…ILFL), and 268-285 (VVTG…LGVV).

It belongs to the GRP transporter (TC 2.A.7.5) family.

It localises to the cell membrane. The chain is Putative sugar uptake protein spyM18_2243 from Streptococcus pyogenes serotype M18 (strain MGAS8232).